The chain runs to 361 residues: MSSEVSAIGFEGFEKRLEISFFEPSFFADPEGKGLRVLSKNQLDEFLGPAECTIVASLSNEHVDSYVLSESSLFVYAYKIIIKTCGTTKLLKSIPPILKLADSLSLTVRSVRYTRGCFIFPGAQSYPHRSFSEEVSVLDNYFGKLGSGSKAYIMGGSDKQQKWHVYSACAASTRTLDPVYTMEMCMTSLNRDKASVFYKTNSSSATSVTDNSGLRDILPNSRICDFEFDPCGYSMNAVEGPAVSTIHITPEDGFSYSSFEAVGYDPKSVNLSDLVARVLNCFQPGEFSIALQADIASELLEKTSSVHVKGYRVEEKTCEELGMDGSIVYQKFVKTTERCESPRSVLKCCWKEEEKEEKEYQ.

Catalysis depends on residues glutamate 11 and glutamate 14. Serine 71 acts as the Schiff-base intermediate with substrate; via pyruvic acid in catalysis. The residue at position 71 (serine 71) is a Pyruvic acid (Ser); by autocatalysis. Cysteine 85 serves as the catalytic Proton donor; for catalytic activity. Residues serine 234 and histidine 247 each act as proton acceptor; for processing activity in the active site.

This sequence belongs to the eukaryotic AdoMetDC family. Requires pyruvate as cofactor. Is synthesized initially as an inactive proenzyme. Formation of the active enzyme involves a self-maturation process in which the active site pyruvoyl group is generated from an internal serine residue via an autocatalytic post-translational modification. Two non-identical subunits are generated from the proenzyme in this reaction, and the pyruvate is formed at the N-terminus of the alpha chain, which is derived from the carboxyl end of the proenzyme. The post-translation cleavage follows an unusual pathway, termed non-hydrolytic serinolysis, in which the side chain hydroxyl group of the serine supplies its oxygen atom to form the C-terminus of the beta chain, while the remainder of the serine residue undergoes an oxidative deamination to produce ammonia and the pyruvoyl group blocking the N-terminus of the alpha chain.

The enzyme catalyses S-adenosyl-L-methionine + H(+) = S-adenosyl 3-(methylsulfanyl)propylamine + CO2. The protein operates within amine and polyamine biosynthesis; S-adenosylmethioninamine biosynthesis; S-adenosylmethioninamine from S-adenosyl-L-methionine: step 1/1. This chain is S-adenosylmethionine decarboxylase proenzyme (SAMDC), found in Daucus carota (Wild carrot).